A 69-amino-acid polypeptide reads, in one-letter code: Conotoxin SIVA (69 aa).

An N-terminal signal peptide occupies residues 1–21 (MGMRMMFTVFLLVVLATTVVS). A propeptide spanning residues 22–38 (TPSDRASDGRNAAVHER) is cleaved from the precursor. Gln39 is modified (pyrrolidone carboxylic acid). Ser45 carries an O-linked (HexNAc...) serine glycan. 4-hydroxyproline occurs at positions 55, 60, and 61. Cys68 carries the post-translational modification Cysteine amide.

Belongs to the conotoxin A superfamily. In terms of processing, contains 3 disulfide bonds. Post-translationally, O-linked glycan consists of Hex3-HexNAc2 pentasaccharide. In terms of tissue distribution, expressed by the venom duct.

It localises to the secreted. Functionally, neurotoxin with probable activity on sodium channel. Induces intense repetitive firing of the frog neuromuscular junction, leading to a tetanic contracture in muscle fiber (spastic paralysis). In vivo, shows the same effect as the whole venom when injected on fish. Intraperitoneal injection into fish induces a period of rapid swimming followed by a spastic paralysis with stiff fibrillating fins. At high doses, the peptide is lethal to both fish and mice. This Conus striatus (Striated cone) protein is Conotoxin SIVA.